The chain runs to 46 residues: Esculentin-1R (46 aa).

Cys40 and Cys46 are joined by a disulfide.

In terms of tissue distribution, expressed by the skin glands.

The protein resides in the secreted. In terms of biological role, shows antibacterial activity against representative Gram-negative and Gram-positive bacterial species, and hemolytic activity. The protein is Esculentin-1R of Pelophylax ridibundus (Marsh frog).